Consider the following 1252-residue polypeptide: Myosin-1 (1252 aa).

Residues 1-27 form a disordered region; the sequence is MAPSKKAGKKVTPASKKSAGQGKVAKA. Residues 38-712 enclose the Myosin motor domain; sequence VGVSDMTLLT…TLFALETMRD (675 aa). 128 to 135 lines the ATP pocket; it reads GESGAGKT. Serine 356 is subject to Phosphoserine. The segment at 403–485 is actin-binding; it reads IIGILDIFGF…PGIFAALNDA (83 aa). IQ domains follow at residues 716-736 and 737-762; these read HNMA…KHEC and ARRI…YGHQ. The region spanning 770 to 953 is the TH1 domain; sequence RRRFSLLSYR…TVHVASGEPP (184 aa). Disordered regions lie at residues 945–1049 and 1103–1228; these read VHVA…PETP and PPKA…PATA. Pro residues-rich tracts occupy residues 989 to 999 and 1028 to 1046; these read RSVPKPKPVAQ and RPPP…PAKP. One can recognise an SH3 domain in the interval 1046–1104; that stretch reads PETPMYRAKFAFEGQEGEMSLKKDDVVELVEKDDNGWWLVKMDGVEGWAPNNYLELVPP. A compositionally biased stretch (polar residues) spans 1162–1175; that stretch reads ADTTPASSRPSSAI. Positions 1178–1193 are enriched in pro residues; it reads KPPPPVAAKPKPPVIP. Positions 1194-1203 are enriched in low complexity; it reads VKPSVSAKGP. Over residues 1204–1215 the composition is skewed to pro residues; the sequence is AKPPIPTAPRPP. Over residues 1216 to 1228 the composition is skewed to low complexity; the sequence is AASTSRSSKPATA.

This sequence belongs to the TRAFAC class myosin-kinesin ATPase superfamily. Myosin family. Post-translationally, phosphorylation of the TEDS site (Ser-356) is required for the polarization of the actin cytoskeleton. Phosphorylation probably activates the myosin-I ATPase activity.

The protein localises to the cytoplasm. Its subcellular location is the cytoskeleton. It localises to the actin patch. Its function is as follows. Type-I myosin implicated in the organization of the actin cytoskeleton. Required for proper actin cytoskeleton polarization. At the cell cortex, assembles in patch-like structures together with proteins from the actin-polymerizing machinery and promotes actin assembly. Functions as actin nucleation-promoting factor (NPF) for the Arp2/3 complex. This Laccaria bicolor (strain S238N-H82 / ATCC MYA-4686) (Bicoloured deceiver) protein is Myosin-1 (MYO1).